A 302-amino-acid chain; its full sequence is Putative fructose-bisphosphate aldolase (302 aa).

Catalysis depends on D86, which acts as the Proton donor. Zn(2+) contacts are provided by H87, D116, E146, and H192. A dihydroxyacetone phosphate-binding site is contributed by G193. A Zn(2+)-binding site is contributed by H223. Dihydroxyacetone phosphate contacts are provided by residues G224–D226 and N245–R248.

The protein belongs to the class II fructose-bisphosphate aldolase family. Homodimer. The cofactor is Zn(2+).

It catalyses the reaction beta-D-fructose 1,6-bisphosphate = D-glyceraldehyde 3-phosphate + dihydroxyacetone phosphate. The protein operates within carbohydrate degradation; glycolysis; D-glyceraldehyde 3-phosphate and glycerone phosphate from D-glucose: step 4/4. In terms of biological role, catalyzes the aldol condensation of dihydroxyacetone phosphate (DHAP or glycerone-phosphate) with glyceraldehyde 3-phosphate (G3P) to form fructose 1,6-bisphosphate (FBP) in gluconeogenesis and the reverse reaction in glycolysis. The protein is Putative fructose-bisphosphate aldolase of Coccidioides immitis (strain RS) (Valley fever fungus).